Consider the following 442-residue polypeptide: ATP-dependent protease ATPase subunit HslU (442 aa).

ATP is bound by residues isoleucine 18, 60–65 (GVGKTE), aspartate 255, glutamate 320, and arginine 392.

This sequence belongs to the ClpX chaperone family. HslU subfamily. A double ring-shaped homohexamer of HslV is capped on each side by a ring-shaped HslU homohexamer. The assembly of the HslU/HslV complex is dependent on binding of ATP.

It is found in the cytoplasm. Its function is as follows. ATPase subunit of a proteasome-like degradation complex; this subunit has chaperone activity. The binding of ATP and its subsequent hydrolysis by HslU are essential for unfolding of protein substrates subsequently hydrolyzed by HslV. HslU recognizes the N-terminal part of its protein substrates and unfolds these before they are guided to HslV for hydrolysis. This Aeromonas salmonicida (strain A449) protein is ATP-dependent protease ATPase subunit HslU.